Here is a 491-residue protein sequence, read N- to C-terminus: (1S)-1-hydroxy-luvungin A synthase CYP88A37 (491 aa).

Residues 5-25 traverse the membrane as a helical segment; that stretch reads FSWLILALAIFIGTYAFVFGV. Cys-439 contacts heme.

Belongs to the cytochrome P450 family. Heme is required as a cofactor. As to expression, expressed in maturing fruits and in juice vesicles.

Its subcellular location is the membrane. The enzyme catalyses luvungin A + reduced [NADPH--hemoprotein reductase] + O2 = (1S)-1-hydroxy-luvungin A + oxidized [NADPH--hemoprotein reductase] + H2O + H(+). It participates in secondary metabolite biosynthesis; terpenoid biosynthesis. In terms of biological role, monooxygenase involved in the biosynthesis of limonoids triterpene natural products such as limonin, a compound with insecticidal activity responsible for the bitter taste in citrus. Catalyzes the conversion of luvungin A to (1S)-1-hydroxy-luvungin A. This chain is (1S)-1-hydroxy-luvungin A synthase CYP88A37, found in Citrus sinensis (Sweet orange).